The following is a 209-amino-acid chain: Uridine kinase (209 aa).

Residue 12–19 coordinates ATP; it reads GGSGSGKT.

The protein belongs to the uridine kinase family.

It localises to the cytoplasm. The enzyme catalyses uridine + ATP = UMP + ADP + H(+). It carries out the reaction cytidine + ATP = CMP + ADP + H(+). It functions in the pathway pyrimidine metabolism; CTP biosynthesis via salvage pathway; CTP from cytidine: step 1/3. It participates in pyrimidine metabolism; UMP biosynthesis via salvage pathway; UMP from uridine: step 1/1. The protein is Uridine kinase of Streptococcus mutans serotype c (strain ATCC 700610 / UA159).